Reading from the N-terminus, the 549-residue chain is Cation/acetate symporter ActP (549 aa).

Transmembrane regions (helical) follow at residues 33 to 53 (WQAI…TYWA), 77 to 97 (LAIA…ALVF), 103 to 123 (GLIY…LIAE), 148 to 168 (ILSA…QMVG), 183 to 203 (IAVV…GMLA), 206 to 226 (WVQI…AFMV), 262 to 282 (ISAL…PHIL), 303 to 323 (GFMG…IMLV), 355 to 375 (LFLG…VAGL), 404 to 424 (VSKI…VLFE), 428 to 448 (IAFM…PIIL), 464 to 484 (GGWL…TIWV), and 493 to 513 (IFPY…GIWF).

Belongs to the sodium:solute symporter (SSF) (TC 2.A.21) family.

The protein localises to the cell inner membrane. Transports acetate. In Citrobacter koseri (strain ATCC BAA-895 / CDC 4225-83 / SGSC4696), this protein is Cation/acetate symporter ActP.